We begin with the raw amino-acid sequence, 1155 residues long: Protein BREAST CANCER SUSCEPTIBILITY 2 homolog B (1155 aa).

4 BRCA2 repeats span residues 63–97, 116–150, 163–197, and 257–291; these read MPGEIPMFRTGLGKSVVLKESSIAKAKSILAENVA, TAETMPMFRTALGKTVPLKESSIAKPLSILGSDMI, FGVPNSLFQTASNKKVNVSSAGLARAKALLGLEED, and LKVPPTKFQTAGGKSLSVSAEALKRARNLLGDPEL.

As to quaternary structure, interacts with RAD51 and DMC1. Interacts with DSS1(I) and DSS1(V). Can interact with both RAD51 and DSS1(I) or both DMC1 and DSS1(I) in a tripartite complex. As to expression, expressed in flower buds.

Involved in double-strand break repair and/or homologous recombination by mediating RAD51- and DMC1-facilitated DNA repair. Plays an essential role in both somatic and meiotic homologous recombination. Is crucial for the formation of RAD51 and DMC1 foci during male meiotic homologous recombination in prophase I. This Arabidopsis thaliana (Mouse-ear cress) protein is Protein BREAST CANCER SUSCEPTIBILITY 2 homolog B.